The primary structure comprises 130 residues: uncharacterized protein (130 aa).

This is an uncharacterized protein from Escherichia coli (strain K12).